The primary structure comprises 135 residues: Ribonuclease VapC9 (135 aa).

One can recognise a PINc domain in the interval 15-118; it reads VVDTNVLMYV…LKRKAKQRGI (104 aa). Mg(2+) contacts are provided by D17 and D88.

Belongs to the PINc/VapC protein family. Dimer. It depends on Mg(2+) as a cofactor.

Functionally, toxic component of a type II toxin-antitoxin (TA) system. An RNase. The sequence is that of Ribonuclease VapC9 from Archaeoglobus fulgidus (strain ATCC 49558 / DSM 4304 / JCM 9628 / NBRC 100126 / VC-16).